Consider the following 855-residue polypeptide: Putative AAA family ATPase R476 (855 aa).

A compositionally biased stretch (basic and acidic residues) spans 1-13 (MNKRDFSELKNSE). Positions 1–37 (MNKRDFSELKNSESSEESSLVSSTETVRSSKRNKKFH) are disordered. The span at 17 to 27 (ESSLVSSTETV) shows a compositional bias: low complexity. Residue 610-617 (GPPGTGKT) participates in ATP binding.

The protein belongs to the AAA ATPase family.

The protein is Putative AAA family ATPase R476 of Acanthamoeba polyphaga mimivirus (APMV).